A 658-amino-acid chain; its full sequence is MSNLSVNAIRFLGIDAINKANSGHPGVVMGAAPMAYSLFTKQLHINPAQPNWINRDRFILSAGHGSMLLYALLHLSGFEDVSMDEIKSFRQWGSKTPGHPEFGHTAGIDATTGPLGQGISTATGFAQAERFLAAKYNREGYNIFDHYTYVICGDGDLMEGVSSEAASYAGLQKLDKLVVLYDSNDINLDGETKDSFTESVRDRYNAYGWHTALVENGTDLEAIHAAIETAKASGKPSLIEVKTVIGYGSPNKQGTNAVHGAPLGADETASTRQALGWDYEPFEIPEQVYADFKEHVADRGASAYQAWTKLVADYKEAHPELAAEVEAIIDGRDPVEVTPADFPALENGFSQATRNSSQDALNVVAAKLPTFLGGSADLAHSNMTYIKTDGLQDDANRLNRNIQFGVREFAMGTILNGMALHGGLRVYGGTFFVFSDYVKAAVRLSALQGLPVTYVFTHDSIAVGEDGPTHEPVEHLAGLRAMPNLNVFRPADARETQAAWYLAVTSEKTPTALVLTRQNLTVEDGTDFDKVAKGAYVVYENAADFDTILIATGSEVNLAVSAAKELASQGEKIRVVSMPSTDVFDKQDAAYKEEILPNAVRRRVAVEMGASQNWYKYVGLDGAVLGIDTFGASAPAPKVLAEYGFTVENLVKVVRNLK.

Position 24 (His-24) interacts with substrate. Thiamine diphosphate contacts are provided by residues His-64 and 113-115 (GPL). A Mg(2+)-binding site is contributed by Asp-154. Gly-155 and Asn-184 together coordinate thiamine diphosphate. 2 residues coordinate Mg(2+): Asn-184 and Ile-186. Substrate is bound by residues His-259, Arg-354, and Ser-381. His-259 is a binding site for thiamine diphosphate. The Proton donor role is filled by Glu-408. Thiamine diphosphate is bound at residue Phe-434. His-458, Asp-466, and Arg-517 together coordinate substrate.

This sequence belongs to the transketolase family. Homodimer. Mg(2+) serves as cofactor. It depends on Ca(2+) as a cofactor. The cofactor is Mn(2+). Co(2+) is required as a cofactor. Requires thiamine diphosphate as cofactor.

The catalysed reaction is D-sedoheptulose 7-phosphate + D-glyceraldehyde 3-phosphate = aldehydo-D-ribose 5-phosphate + D-xylulose 5-phosphate. In terms of biological role, necessary for high-efficiency recombination chromosomal DNA during genetic transformation. Catalyzes the transfer of a two-carbon ketol group from a ketose donor to an aldose acceptor, via a covalent intermediate with the cofactor thiamine pyrophosphate. This Streptococcus pneumoniae serotype 4 (strain ATCC BAA-334 / TIGR4) protein is Probable transketolase (tkt).